We begin with the raw amino-acid sequence, 331 residues long: Anthranilate phosphoribosyltransferase (331 aa).

Residues G79, 82 to 83 (GD), T87, 89 to 92 (NVST), 107 to 115 (KHGNYGVSS), and S119 contribute to the 5-phospho-alpha-D-ribose 1-diphosphate site. Position 79 (G79) interacts with anthranilate. S91 lines the Mg(2+) pocket. N110 serves as a coordination point for anthranilate. Residue R165 coordinates anthranilate. Mg(2+) is bound by residues D223 and E224.

Belongs to the anthranilate phosphoribosyltransferase family. Homodimer. Mg(2+) serves as cofactor.

It catalyses the reaction N-(5-phospho-beta-D-ribosyl)anthranilate + diphosphate = 5-phospho-alpha-D-ribose 1-diphosphate + anthranilate. The protein operates within amino-acid biosynthesis; L-tryptophan biosynthesis; L-tryptophan from chorismate: step 2/5. Functionally, catalyzes the transfer of the phosphoribosyl group of 5-phosphorylribose-1-pyrophosphate (PRPP) to anthranilate to yield N-(5'-phosphoribosyl)-anthranilate (PRA). This Christiangramia forsetii (strain DSM 17595 / CGMCC 1.15422 / KT0803) (Gramella forsetii) protein is Anthranilate phosphoribosyltransferase.